Reading from the N-terminus, the 358-residue chain is Zinc transporter ZIP1 (358 aa).

The Extracellular portion of the chain corresponds to 1-7; it reads MDLLFAK. A helical membrane pass occupies residues 8–28; sequence IICIGIFLVVTTFGCFIPHLM. Topologically, residues 29 to 53 are cytoplasmic; the sequence is GLYKEKENEEKNKRVKNILSNLNCF. A helical membrane pass occupies residues 54–74; sequence GSGFIFSIIMFHLLPETIHII. The Extracellular segment spans residues 75–91; that stretch reads SDHGNIRIFNTSDSQMK. Residues 92–112 form a helical membrane-spanning segment; it reads ILYIFFFVFIGFCMQLGLEYV. Residues 113 to 186 are Cytoplasmic-facing; sequence LPVDTNICCV…GKFLEILTLQ (74 aa). A helical membrane pass occupies residues 187 to 207; it reads SFFLTISLAIHSCIEGMIIGT. Over 208–213 the chain is Extracellular; it reads STDVNY. A helical membrane pass occupies residues 214 to 234; sequence VFISSFCILLHKWIAGVTVSL. The Cytoplasmic portion of the chain corresponds to 235-246; it reads SLNSNNMNKTLK. The chain crosses the membrane as a helical span at residues 247 to 267; it reads AILLLTFVFASPLGIVLGHMA. The Extracellular portion of the chain corresponds to 268–273; sequence KSAGQK. The helical transmembrane segment at 274-294 threads the bilayer; the sequence is VTCLINAVSIGTLLFIGCEIL. At 295-310 the chain is on the cytoplasmic side; that stretch reads LNEIKQNISRKVRLCK. The chain crosses the membrane as a helical span at residues 311 to 331; it reads WLSFCFSCLIAFALISFTTSM. At 332–358 the chain is on the extracellular side; the sequence is APHTHGDIDTHVHVHHHDHDHDHGHNH.

Belongs to the ZIP transporter (TC 2.A.5) family. Homodimer.

It localises to the plastid. Its subcellular location is the apicoplast. It is found in the cell membrane. The catalysed reaction is Zn(2+)(in) = Zn(2+)(out). It catalyses the reaction Fe(2+)(in) = Fe(2+)(out). Its function is as follows. Transporter for the divalent zinc cation. Mediates the influx of zinc into cells from extracellular space. Can transport divalent iron ions. Does not transport manganese and cadmium cations. The polypeptide is Zinc transporter ZIP1 (Plasmodium falciparum (isolate 3D7)).